The sequence spans 420 residues: Phosphoglycerate kinase, cytosolic (420 aa).

Positions 23, 24, 25, 26, 39, 61, 62, 64, 65, 135, 171, and 172 each coordinate (2R)-3-phosphoglycerate. ADP is bound at residue G217. Position 217 (G217) interacts with CDP. K219 contributes to the (2R)-3-phosphoglycerate binding site. Residue K219 participates in AMP binding. Position 222 (D222) interacts with CDP. D222 contacts Mg(2+). ADP is bound by residues K223 and G241. K223 lines the AMP pocket. An ATP-binding site is contributed by K223. Residue G241 coordinates CDP. AMP contacts are provided by A242 and A314. ATP is bound by residues A242 and A314. Residues A314 and N338 each contribute to the ADP site. The CDP site is built by G339 and F344. The ADP site is built by F344, E345, D377, and S378. E345 contributes to the AMP binding site. The ATP site is built by E345, D377, and S378. D377 contacts Mg(2+).

This sequence belongs to the phosphoglycerate kinase family. As to quaternary structure, monomer. It depends on Mg(2+) as a cofactor.

It is found in the cytoplasm. The enzyme catalyses (2R)-3-phosphoglycerate + ATP = (2R)-3-phospho-glyceroyl phosphate + ADP. It functions in the pathway carbohydrate degradation; glycolysis; pyruvate from D-glyceraldehyde 3-phosphate: step 2/5. The chain is Phosphoglycerate kinase, cytosolic (C1PGK) from Trypanosoma congolense.